The chain runs to 101 residues: Large ribosomal subunit protein uL24 (101 aa).

Belongs to the universal ribosomal protein uL24 family. Part of the 50S ribosomal subunit.

In terms of biological role, one of two assembly initiator proteins, it binds directly to the 5'-end of the 23S rRNA, where it nucleates assembly of the 50S subunit. Its function is as follows. One of the proteins that surrounds the polypeptide exit tunnel on the outside of the subunit. The polypeptide is Large ribosomal subunit protein uL24 (Ligilactobacillus salivarius (strain UCC118) (Lactobacillus salivarius)).